The following is a 271-amino-acid chain: 3-methyl-2-oxobutanoate hydroxymethyltransferase (271 aa).

Mg(2+) contacts are provided by aspartate 53 and aspartate 92. 3-methyl-2-oxobutanoate is bound by residues 53-54 (DS), aspartate 92, and lysine 120. Glutamate 122 contributes to the Mg(2+) binding site. The active-site Proton acceptor is glutamate 189.

The protein belongs to the PanB family. Homodecamer; pentamer of dimers. Requires Mg(2+) as cofactor.

Its subcellular location is the cytoplasm. It carries out the reaction 3-methyl-2-oxobutanoate + (6R)-5,10-methylene-5,6,7,8-tetrahydrofolate + H2O = 2-dehydropantoate + (6S)-5,6,7,8-tetrahydrofolate. It participates in cofactor biosynthesis; (R)-pantothenate biosynthesis; (R)-pantoate from 3-methyl-2-oxobutanoate: step 1/2. In terms of biological role, catalyzes the reversible reaction in which hydroxymethyl group from 5,10-methylenetetrahydrofolate is transferred onto alpha-ketoisovalerate to form ketopantoate. This Paraburkholderia phytofirmans (strain DSM 17436 / LMG 22146 / PsJN) (Burkholderia phytofirmans) protein is 3-methyl-2-oxobutanoate hydroxymethyltransferase.